The following is a 379-amino-acid chain: Cytochrome b (379 aa).

4 helical membrane passes run 33-53 (FGSLLGMCLGLQILTGLFLAM), 77-98 (WLIRYMHANGASMFFIFLYFHI), 113-133 (WNMGVLLLLTTMATAFMGYVL), and 178-198 (FFAFHFILPFIITAMVMIHLL). 2 residues coordinate heme b: histidine 83 and histidine 97. Heme b-binding residues include histidine 182 and histidine 196. Residue histidine 201 coordinates a ubiquinone. 4 consecutive transmembrane segments (helical) span residues 226–246 (IKDILGALFMIITLMSLVMFS), 288–308 (LGGVLALASSILILMLFPILH), 320–340 (LSQCLMWMLVTNLLILTWIGG), and 347–367 (FITIGQMASMTYFFTTLILMP).

The protein belongs to the cytochrome b family. In terms of assembly, the cytochrome bc1 complex contains 11 subunits: 3 respiratory subunits (MT-CYB, CYC1 and UQCRFS1), 2 core proteins (UQCRC1 and UQCRC2) and 6 low-molecular weight proteins (UQCRH/QCR6, UQCRB/QCR7, UQCRQ/QCR8, UQCR10/QCR9, UQCR11/QCR10 and a cleavage product of UQCRFS1). This cytochrome bc1 complex then forms a dimer. The cofactor is heme b.

The protein resides in the mitochondrion inner membrane. In terms of biological role, component of the ubiquinol-cytochrome c reductase complex (complex III or cytochrome b-c1 complex) that is part of the mitochondrial respiratory chain. The b-c1 complex mediates electron transfer from ubiquinol to cytochrome c. Contributes to the generation of a proton gradient across the mitochondrial membrane that is then used for ATP synthesis. The polypeptide is Cytochrome b (MT-CYB) (Ctenomys leucodon (White-toothed tuco-tuco)).